Consider the following 154-residue polypeptide: Ribonuclease H (154 aa).

Residues 1–142 (MLKQVEIFTD…CDELARRAAG (142 aa)) form the RNase H type-1 domain. The Mg(2+) site is built by D10, E48, D70, and D134.

Belongs to the RNase H family. Monomer. It depends on Mg(2+) as a cofactor.

It localises to the cytoplasm. The catalysed reaction is Endonucleolytic cleavage to 5'-phosphomonoester.. Its function is as follows. Endonuclease that specifically degrades the RNA of RNA-DNA hybrids. The chain is Ribonuclease H from Edwardsiella ictaluri (strain 93-146).